A 101-amino-acid polypeptide reads, in one-letter code: uncharacterized protein (101 aa).

This is an uncharacterized protein from Mycobacterium bovis (strain ATCC BAA-935 / AF2122/97).